Reading from the N-terminus, the 450-residue chain is tRNA modification GTPase MnmE (450 aa).

Residues Arg-24, Glu-82, and Lys-121 each contribute to the (6S)-5-formyl-5,6,7,8-tetrahydrofolate site. In terms of domain architecture, TrmE-type G spans 218–375 (GMHVVLVGQP…LRQVLLEAVG (158 aa)). Asn-228 contacts K(+). GTP-binding positions include 228-233 (NVGKSS), 247-253 (TDIAGTT), 272-275 (DTAG), and 356-358 (SAR). Ser-232 provides a ligand contact to Mg(2+). K(+) contacts are provided by Thr-247, Ile-249, and Thr-252. Thr-253 is a binding site for Mg(2+). Position 450 (Lys-450) interacts with (6S)-5-formyl-5,6,7,8-tetrahydrofolate.

Belongs to the TRAFAC class TrmE-Era-EngA-EngB-Septin-like GTPase superfamily. TrmE GTPase family. In terms of assembly, homodimer. Heterotetramer of two MnmE and two MnmG subunits. K(+) serves as cofactor.

It is found in the cytoplasm. Functionally, exhibits a very high intrinsic GTPase hydrolysis rate. Involved in the addition of a carboxymethylaminomethyl (cmnm) group at the wobble position (U34) of certain tRNAs, forming tRNA-cmnm(5)s(2)U34. This is tRNA modification GTPase MnmE from Laribacter hongkongensis (strain HLHK9).